Reading from the N-terminus, the 311-residue chain is uncharacterized protein (311 aa).

Over residues 1-12 (MPATDTNSTHTT) the composition is skewed to polar residues. Disordered stretches follow at residues 1-44 (MPAT…DEEH) and 205-268 (ERPS…ATVH). The span at 35–44 (TSDKHADEEH) shows a compositional bias: basic and acidic residues.

The protein belongs to the HHV-5 HKLF1 family.

This is an uncharacterized protein from Human cytomegalovirus (strain AD169) (HHV-5).